The chain runs to 684 residues: DNA ligase (684 aa).

NAD(+) contacts are provided by residues 46–50 (DYVYD), 100–101 (SL), and glutamate 130. The active-site N6-AMP-lysine intermediate is lysine 132. Residues arginine 153, glutamate 187, lysine 303, and lysine 327 each coordinate NAD(+). Residues cysteine 421, cysteine 424, cysteine 439, and cysteine 444 each coordinate Zn(2+). The 81-residue stretch at 604–684 (DEKNYFFNKR…DFINLSNAKK (81 aa)) folds into the BRCT domain.

It belongs to the NAD-dependent DNA ligase family. LigA subfamily. Mg(2+) serves as cofactor. It depends on Mn(2+) as a cofactor.

It carries out the reaction NAD(+) + (deoxyribonucleotide)n-3'-hydroxyl + 5'-phospho-(deoxyribonucleotide)m = (deoxyribonucleotide)n+m + AMP + beta-nicotinamide D-nucleotide.. Functionally, DNA ligase that catalyzes the formation of phosphodiester linkages between 5'-phosphoryl and 3'-hydroxyl groups in double-stranded DNA using NAD as a coenzyme and as the energy source for the reaction. It is essential for DNA replication and repair of damaged DNA. The polypeptide is DNA ligase (Oenococcus oeni (strain ATCC BAA-331 / PSU-1)).